The primary structure comprises 518 residues: G1/S-specific cyclin-E (518 aa).

The tract at residues 1–193 (MAGRKSSRTT…DEETEDEFDL (193 aa)) is disordered. A compositionally biased stretch (basic and acidic residues) spans 13–46 (PVKKAERKSAILSPHDELRERLLETSLDVKENIP). A compositionally biased stretch (polar residues) spans 47–62 (ERSSSTRNESVGSQRS). The segment covering 82 to 107 (PSTEKKGNGSRDDSFSSVFSEDRETE) has biased composition (basic and acidic residues). Positions 108–119 (SSVGSTSSRTRG) are enriched in low complexity. Positions 135–154 (SSDHNAESEESRETPQSDEH) are enriched in basic and acidic residues. Over residues 155–192 (DGFEEDGDVEDDVSSDVNDEEDEYDEYEEDEETEDEFD) the composition is skewed to acidic residues.

Belongs to the cyclin family. Cyclin E subfamily. Interacts with a member of the CDK2/CDK protein kinases to form a serine/threonine kinase holoenzyme complex. The cyclin subunit imparts substrate specificity to the complex.

Its subcellular location is the nucleus. The protein resides in the cytoplasm. The protein localises to the cytoskeleton. It localises to the microtubule organizing center. It is found in the centrosome. Its subcellular location is the centriole. Essential for the control of the cell cycle at the G1/S (start) transition. In association with cdk-2, regulates proliferation, quiescent state and cell fate during the development of several cell lineages. In the embryo, initiates the establishment of cell polarity through the recruitment of the centrosomal proteins spd-2 and spd-5 during prophase. During the development of the vulva, controls the onset of vulval cell terminal differentiation by controlling the duration of G1 phase. During hypoderm development at early larval stages, controls syncytial fate of seam cell daughter cells. Involved in the progression of cell division in the intestinal lineage in larvae, and in particular in endoreplication, a specific growth pathway in the intestinal epithelium, required for feeding and gut development in growing larvae. By controlling the activity of translational repressor gld-1, regulates the pool of germline stem cells and the size of the mitotic zone by preventing entry into meiosis. In addition, repression of expression by gld-1 prevents mitosis re-entry in meiotic germline cells. This Caenorhabditis briggsae protein is G1/S-specific cyclin-E (cye-1).